Here is a 394-residue protein sequence, read N- to C-terminus: Penicillopepsin-3 (394 aa).

Positions 1 to 20 are cleaved as a signal peptide; it reads MVSFTQLQLAFLGLSALGAA. Residues 21–70 constitute a propeptide, activation peptide; it reads VPVTGTSEKKTFSLNQVKVAGTKTKNPAEHYANALRKYGAEVPSHVLAAA. Positions 87–392 constitute a Peptidase A1 domain; that stretch reads YLTPIDVGGT…DASGPRLGFA (306 aa). Catalysis depends on residues Asp-103 and Asp-284. Cysteines 320 and 355 form a disulfide.

The protein belongs to the peptidase A1 family. As to quaternary structure, monomer.

The protein resides in the secreted. The enzyme catalyses Hydrolysis of proteins with broad specificity similar to that of pepsin A, preferring hydrophobic residues at P1 and P1', but also cleaving 20-Gly-|-Glu-21 in the B chain of insulin. Clots milk, and activates trypsinogen.. Its function is as follows. Secreted aspartic endopeptidase that allows assimilation of proteinaceous substrates. The scissile peptide bond is attacked by a nucleophilic water molecule activated by two aspartic residues in the active site. Shows a broad primary substrate specificity. Favors hydrophobic residues at the P1 and P1' positions, but can also activate trypsinogen and hydrolyze the B chain of insulin between positions 'Gly-20' and 'Glu-21'. This chain is Penicillopepsin-3, found in Penicillium janthinellum (Penicillium vitale).